A 202-amino-acid polypeptide reads, in one-letter code: MSYLVPMVIEQTNRGERSYDIYSRLLKDRIIFLGGPVTDDVANLVVAQMLFLEAEDPEKDIFLYINSPGGSISAGMAIYDTMQYIRADVHTICVGLAASMGAFLLTAGAKGKRQALPNAEILIHQPLIGGGGISGQATEIEIHAKHLLRVKERMNRILAERTGQTIERIEADTDRDRYMTAEEAKEYGLIDEVLEKPNQPKK.

Ser99 (nucleophile) is an active-site residue. The active site involves His124.

The protein belongs to the peptidase S14 family. In terms of assembly, fourteen ClpP subunits assemble into 2 heptameric rings which stack back to back to give a disk-like structure with a central cavity, resembling the structure of eukaryotic proteasomes.

Its subcellular location is the cytoplasm. The enzyme catalyses Hydrolysis of proteins to small peptides in the presence of ATP and magnesium. alpha-casein is the usual test substrate. In the absence of ATP, only oligopeptides shorter than five residues are hydrolyzed (such as succinyl-Leu-Tyr-|-NHMec, and Leu-Tyr-Leu-|-Tyr-Trp, in which cleavage of the -Tyr-|-Leu- and -Tyr-|-Trp bonds also occurs).. Its function is as follows. Cleaves peptides in various proteins in a process that requires ATP hydrolysis. Has a chymotrypsin-like activity. Plays a major role in the degradation of misfolded proteins. The sequence is that of ATP-dependent Clp protease proteolytic subunit 2 from Desulfitobacterium hafniense (strain Y51).